A 399-amino-acid chain; its full sequence is MLRLGRSAASEVSSIRNSLQLQLEQRGARPMQCAYQTQSHSNPEGAKRGRSPMSLAVMGAAALSVGLELQTDGIAQARAAMEPGTQLQRHKWQLFDQIGAGAFGVVRLGMHEESGEVAAVKIVPLENPNDQRSYPALEREIAALKLVKALGGHNSIVDLRDVYVEGRKLFLVTELARGGELFEQIVAYGSFPELKARDVAREMASALSFMHRHGLVHKDVKPENILMSARVVDHNSGVYRKSNRHESSSLVKLADFGSAGPASVNTNLEDIGTAAYLPPEVLNSGMCTSACDMWALGCVLYIMLSGSHPFDLDGMSADSVVEHRVKSEPVTFDFSAWDNVSPHAKDLISKLLVKDPTLRLTADQMLQHPWMNASAEAAAAGLRRPSPLLAGQPIPRGPA.

The disordered stretch occupies residues Pro30–Arg50. One can recognise a Protein kinase domain in the interval Trp92–Met371. ATP contacts are provided by residues Ile98–Val106 and Lys121. The active-site Proton acceptor is Asp219.

It belongs to the protein kinase superfamily. CAMK Ser/Thr protein kinase family. In terms of assembly, interacts with BZP1.

The catalysed reaction is L-seryl-[protein] + ATP = O-phospho-L-seryl-[protein] + ADP + H(+). The enzyme catalyses L-threonyl-[protein] + ATP = O-phospho-L-threonyl-[protein] + ADP + H(+). Functionally, may regulate an early stage of the zoospore pathway. The sequence is that of Serine/threonine-protein kinase PKZ1 from Phytophthora infestans (Potato late blight agent).